We begin with the raw amino-acid sequence, 449 residues long: MFS-type transporter hasB (449 aa).

12 consecutive transmembrane segments (helical) span residues 44–64, 80–100, 112–132, 135–155, 168–188, 195–215, 255–275, 296–316, 322–342, 346–366, 387–407, and 415–435; these read VAGSFLLQFCSFGYVNACGIF, ALAWITTLQIFLLFMFGPAVG, LPPFSIGAVFSVCMLSLCTKY, VMLAQGVAFGLAAAGLSLPAM, LAVGIVSAGSSLGGVIYPCML, VGFASAVRWTALMQGILLFIA, LPWGFFVLGCFFTMWGLFAPL, AIANAGSLVGRIVPGWVSDII, MCIVTSLSGVLVLAFWLPLEF, LAGIIVFALLFGFVSGGFVSL, GGFCLAIALGALTGLPIEGAI, and FTGLMCFAGATMILGGVCTGT.

It belongs to the major facilitator superfamily. Monocarboxylate porter (TC 2.A.1.13) family.

The protein localises to the membrane. Its function is as follows. MFS-type transporter; part of the gene cluster that mediates the biosynthesis of hexadehydro-astechrome (HAS), a tryptophan-derived iron(III)-complex that acts as a virulence factor in infected mice. Required for the production of HAS. In Aspergillus fumigatus (strain CBS 144.89 / FGSC A1163 / CEA10) (Neosartorya fumigata), this protein is MFS-type transporter hasB.